The chain runs to 131 residues: Type IV wide pilus major component PilA4 (131 aa).

Residues 1–6 (MRNAKG) constitute a propeptide, leader sequence. Phenylalanine 7 carries the N-methylphenylalanine modification. A helical membrane pass occupies residues 7–27 (FTLIELLIVIAIIAILAAVLI). Cysteine 95 and cysteine 130 are disulfide-bonded.

Interacts with PilQ. In terms of processing, found in three forms of 14-kDa, 18-kDa and a glycosylated 23-kDa form. Both narrow and wide pili are glycosylated.

Its subcellular location is the cell inner membrane. It is found in the cell outer membrane. It localises to the periplasm. Functionally, plays an essential role in the assembly of two types of T4P pili: a wide and a narrow that participate in natural transformation and twitching motility. Major component of the wide pilus that is essential for natural transformation working as a DNA translocator structure that spans the inner and outer membranes. In addition, participates in the assembly of the narrow pilus composed of the PilA5 subunit that is required for twitching motility. The sequence is that of Type IV wide pilus major component PilA4 (pilA4) from Thermus thermophilus (strain ATCC BAA-163 / DSM 7039 / HB27).